Reading from the N-terminus, the 330-residue chain is Stimulated by retinoic acid gene 8 protein homolog (330 aa).

Positions 50–55 match the Nuclear localization signal (NLS) motif; the sequence is RVARRR. The stretch at 88 to 112 forms a coiled coil; that stretch reads QVLNKAKSHIPELEQTLDNLLKLKA.

Interacts with XPO1. Interacts with MEIOSIN. Phosphorylated. Expressed specifically in testis and fetal ovaries.

The protein localises to the cytoplasm. It localises to the nucleus. Its function is as follows. Meiosis-inducer required for the transition into meiosis for both female and male germ cells. In female germ cells, acts downstream of ZGLP1 as a key effector of the meiotic program: required for premeiotic DNA replication and subsequent events in meiotic prophase. During spermatogenesis, next to its role in meiotic initiation, promotes (but is not required for) spermatogonial differentiation. In complex with MEIOSIN, directly activates the transcription of a subset of critical meiotic genes playing a central role in cell-cycle switching from mitosis to meiosis. This chain is Stimulated by retinoic acid gene 8 protein homolog, found in Homo sapiens (Human).